The sequence spans 344 residues: Fructose-1,6-bisphosphatase class 1 (344 aa).

Glu-91, Asp-110, Leu-112, and Asp-113 together coordinate Mg(2+). Residues 113-116 (DGSS) and Asn-200 each bind substrate. A Mg(2+)-binding site is contributed by Glu-272.

It belongs to the FBPase class 1 family. Homotetramer. Requires Mg(2+) as cofactor.

Its subcellular location is the cytoplasm. It carries out the reaction beta-D-fructose 1,6-bisphosphate + H2O = beta-D-fructose 6-phosphate + phosphate. It participates in carbohydrate biosynthesis; Calvin cycle. In Rhodopseudomonas palustris (strain BisA53), this protein is Fructose-1,6-bisphosphatase class 1.